Reading from the N-terminus, the 193-residue chain is Probable molybdenum cofactor guanylyltransferase (193 aa).

GTP is bound by residues 9 to 11, Lys-21, Asp-64, and Asp-93; that span reads TAG. Asp-93 is a binding site for Mg(2+).

The protein belongs to the MobA family. It depends on Mg(2+) as a cofactor.

Its subcellular location is the cytoplasm. It carries out the reaction Mo-molybdopterin + GTP + H(+) = Mo-molybdopterin guanine dinucleotide + diphosphate. Its function is as follows. Transfers a GMP moiety from GTP to Mo-molybdopterin (Mo-MPT) cofactor (Moco or molybdenum cofactor) to form Mo-molybdopterin guanine dinucleotide (Mo-MGD) cofactor. The sequence is that of Probable molybdenum cofactor guanylyltransferase from Deinococcus radiodurans (strain ATCC 13939 / DSM 20539 / JCM 16871 / CCUG 27074 / LMG 4051 / NBRC 15346 / NCIMB 9279 / VKM B-1422 / R1).